Here is a 364-residue protein sequence, read N- to C-terminus: Acidic fibroblast growth factor intracellular-binding protein (364 aa).

An N-acetylthreonine modification is found at Thr-2.

In terms of assembly, binds to internalized FGF1; this interaction is increased in the presence of CSNKB, suggesting a possible cooperative interaction between CSNKB and FIBP in binding to FGF1. As to expression, highly expressed in heart, skeletal muscle and pancreas. Expressed at lower levels in brain. Also found in placenta, liver and kidney.

It is found in the nucleus. The protein resides in the endomembrane system. In terms of biological role, may be involved in mitogenic function of FGF1. May mediate with IER2 FGF-signaling in the establishment of laterality in the embryo. This is Acidic fibroblast growth factor intracellular-binding protein (FIBP) from Homo sapiens (Human).